We begin with the raw amino-acid sequence, 93 residues long: YcgL domain-containing protein swp_2294 (93 aa).

The region spanning 1–85 (MICAVYKSLR…PVVNLLEQHK (85 aa)) is the YcgL domain.

In Shewanella piezotolerans (strain WP3 / JCM 13877), this protein is YcgL domain-containing protein swp_2294.